We begin with the raw amino-acid sequence, 198 residues long: Imidazoleglycerol-phosphate dehydratase (198 aa).

It belongs to the imidazoleglycerol-phosphate dehydratase family.

Its subcellular location is the cytoplasm. The enzyme catalyses D-erythro-1-(imidazol-4-yl)glycerol 3-phosphate = 3-(imidazol-4-yl)-2-oxopropyl phosphate + H2O. It functions in the pathway amino-acid biosynthesis; L-histidine biosynthesis; L-histidine from 5-phospho-alpha-D-ribose 1-diphosphate: step 6/9. This is Imidazoleglycerol-phosphate dehydratase from Streptomyces griseus subsp. griseus (strain JCM 4626 / CBS 651.72 / NBRC 13350 / KCC S-0626 / ISP 5235).